A 711-amino-acid polypeptide reads, in one-letter code: Serine/threonine-protein kinase ATG1b (711 aa).

The Protein kinase domain maps to 20-277 (YAVGRQIGSG…FEEFFHHPFL (258 aa)). Residues 26–34 (IGSGSFSVV) and Lys-49 each bind ATP. Asp-142 functions as the Proton acceptor in the catalytic mechanism. Disordered regions lie at residues 318–342 (LPFFLDDDSSGPEGSPSSFKHTSPM) and 383–419 (FEGHRLSDRSQFKPSSLPDSRSFSTQGRGDSPDSMDQ). The span at 383-393 (FEGHRLSDRSQ) shows a compositional bias: basic and acidic residues. Positions 394-410 (FKPSSLPDSRSFSTQGR) are enriched in polar residues. The AIM (Atg8-family-interacting motif) motif lies at 421–424 (YVLI).

This sequence belongs to the protein kinase superfamily. Ser/Thr protein kinase family.

The protein localises to the cytoplasmic vesicle. It is found in the autophagosome. Its function is as follows. Serine/threonine protein kinase involved in autophagy. The ATG1-ATG13 protein kinase complex regulates downstream events required for autophagosome enclosure and/or vacuolar delivery. The protein is Serine/threonine-protein kinase ATG1b of Arabidopsis thaliana (Mouse-ear cress).